We begin with the raw amino-acid sequence, 447 residues long: Tubulin beta chain (447 aa).

Positions 11, 69, 138, 142, 143, 144, 204, and 226 each coordinate GTP. Glu-69 lines the Mg(2+) pocket. Positions 424-447 (QYQDASISEGEEDYEEEPQVENEE) are disordered. The segment covering 432-447 (EGEEDYEEEPQVENEE) has biased composition (acidic residues).

Belongs to the tubulin family. Dimer of alpha and beta chains. A typical microtubule is a hollow water-filled tube with an outer diameter of 25 nm and an inner diameter of 15 nM. Alpha-beta heterodimers associate head-to-tail to form protofilaments running lengthwise along the microtubule wall with the beta-tubulin subunit facing the microtubule plus end conferring a structural polarity. Microtubules usually have 13 protofilaments but different protofilament numbers can be found in some organisms and specialized cells. Mg(2+) serves as cofactor.

Its subcellular location is the cytoplasm. The protein localises to the cytoskeleton. Tubulin is the major constituent of microtubules, a cylinder consisting of laterally associated linear protofilaments composed of alpha- and beta-tubulin heterodimers. Microtubules grow by the addition of GTP-tubulin dimers to the microtubule end, where a stabilizing cap forms. Below the cap, tubulin dimers are in GDP-bound state, owing to GTPase activity of alpha-tubulin. In Uncinula necator (Grape powdery mildew), this protein is Tubulin beta chain.